Reading from the N-terminus, the 106-residue chain is uncharacterized protein (106 aa).

Residues 9-27 form a helical membrane-spanning segment; the sequence is ALAALAFTLGLIGLAAWAL. Positions 84 to 106 are disordered; that stretch reads TPKGPPPASALSPSPVAEPEPVV.

The protein belongs to the FliO/MopB family.

It localises to the cell membrane. The protein resides in the bacterial flagellum basal body. This is an uncharacterized protein from Caulobacter vibrioides (strain ATCC 19089 / CIP 103742 / CB 15) (Caulobacter crescentus).